We begin with the raw amino-acid sequence, 200 residues long: Peptidyl-tRNA hydrolase (200 aa).

Position 15 (Tyr-15) interacts with tRNA. His-20 (proton acceptor) is an active-site residue. TRNA is bound by residues Tyr-66, Asn-68, and Asn-114.

Belongs to the PTH family. Monomer.

It is found in the cytoplasm. It catalyses the reaction an N-acyl-L-alpha-aminoacyl-tRNA + H2O = an N-acyl-L-amino acid + a tRNA + H(+). In terms of biological role, hydrolyzes ribosome-free peptidyl-tRNAs (with 1 or more amino acids incorporated), which drop off the ribosome during protein synthesis, or as a result of ribosome stalling. Functionally, catalyzes the release of premature peptidyl moieties from peptidyl-tRNA molecules trapped in stalled 50S ribosomal subunits, and thus maintains levels of free tRNAs and 50S ribosomes. In Paraburkholderia xenovorans (strain LB400), this protein is Peptidyl-tRNA hydrolase.